The following is a 764-amino-acid chain: DNA polymerase 3 (764 aa).

The protein belongs to the DNA polymerase type-B family.

The catalysed reaction is DNA(n) + a 2'-deoxyribonucleoside 5'-triphosphate = DNA(n+1) + diphosphate. The protein is DNA polymerase 3 (dpo3) of Saccharolobus solfataricus (strain ATCC 35092 / DSM 1617 / JCM 11322 / P2) (Sulfolobus solfataricus).